The following is a 78-amino-acid chain: Translation initiation factor IF-1 (78 aa).

Residues 1–72 (MAKEAEMEFE…TRGRITYRKI (72 aa)) enclose the S1-like domain.

Belongs to the IF-1 family. Component of the 30S ribosomal translation pre-initiation complex which assembles on the 30S ribosome in the order IF-2 and IF-3, IF-1 and N-formylmethionyl-tRNA(fMet); mRNA recruitment can occur at any time during PIC assembly.

The protein localises to the cytoplasm. One of the essential components for the initiation of protein synthesis. Stabilizes the binding of IF-2 and IF-3 on the 30S subunit to which N-formylmethionyl-tRNA(fMet) subsequently binds. Helps modulate mRNA selection, yielding the 30S pre-initiation complex (PIC). Upon addition of the 50S ribosomal subunit IF-1, IF-2 and IF-3 are released leaving the mature 70S translation initiation complex. The sequence is that of Translation initiation factor IF-1 from Mesoplasma florum (strain ATCC 33453 / NBRC 100688 / NCTC 11704 / L1) (Acholeplasma florum).